Reading from the N-terminus, the 122-residue chain is Large ribosomal subunit protein uL14c (122 aa).

The protein belongs to the universal ribosomal protein uL14 family. Part of the 50S ribosomal subunit.

It is found in the plastid. Its subcellular location is the chloroplast. Binds to 23S rRNA. This chain is Large ribosomal subunit protein uL14c, found in Cryptomeria japonica (Japanese cedar).